The primary structure comprises 306 residues: Porphobilinogen deaminase (306 aa).

Cysteine 244 carries the S-(dipyrrolylmethanemethyl)cysteine modification.

This sequence belongs to the HMBS family. In terms of assembly, monomer. Dipyrromethane serves as cofactor.

The enzyme catalyses 4 porphobilinogen + H2O = hydroxymethylbilane + 4 NH4(+). Its pathway is porphyrin-containing compound metabolism; protoporphyrin-IX biosynthesis; coproporphyrinogen-III from 5-aminolevulinate: step 2/4. In terms of biological role, tetrapolymerization of the monopyrrole PBG into the hydroxymethylbilane pre-uroporphyrinogen in several discrete steps. This is Porphobilinogen deaminase from Streptococcus sanguinis (strain SK36).